A 323-amino-acid polypeptide reads, in one-letter code: tRNA-dihydrouridine synthase B (323 aa).

Residues 16-18 (PMA) and glutamine 70 each bind FMN. Residue cysteine 100 is the Proton donor of the active site. FMN contacts are provided by residues lysine 139, 200 to 202 (NGD), and 224 to 225 (GR).

The protein belongs to the Dus family. DusB subfamily. Requires FMN as cofactor.

It catalyses the reaction a 5,6-dihydrouridine in tRNA + NAD(+) = a uridine in tRNA + NADH + H(+). The catalysed reaction is a 5,6-dihydrouridine in tRNA + NADP(+) = a uridine in tRNA + NADPH + H(+). In terms of biological role, catalyzes the synthesis of 5,6-dihydrouridine (D), a modified base found in the D-loop of most tRNAs, via the reduction of the C5-C6 double bond in target uridines. The protein is tRNA-dihydrouridine synthase B of Proteus vulgaris.